The following is a 121-amino-acid chain: UPF0102 protein XF_0554 (121 aa).

The protein belongs to the UPF0102 family.

The polypeptide is UPF0102 protein XF_0554 (Xylella fastidiosa (strain 9a5c)).